The sequence spans 454 residues: CCA-adding enzyme (454 aa).

ATP is bound by residues Ser-59 and Arg-62. Residues Ser-59 and Arg-62 each coordinate CTP. Residues Asp-71, Asp-73, and Asp-125 each coordinate Mg(2+). Residues His-148, Lys-167, and Tyr-176 each coordinate ATP. Residues His-148, Lys-167, and Tyr-176 each coordinate CTP.

Belongs to the tRNA nucleotidyltransferase/poly(A) polymerase family. Archaeal CCA-adding enzyme subfamily. Homodimer. Requires Mg(2+) as cofactor.

The enzyme catalyses a tRNA precursor + 2 CTP + ATP = a tRNA with a 3' CCA end + 3 diphosphate. The catalysed reaction is a tRNA with a 3' CCA end + 2 CTP + ATP = a tRNA with a 3' CCACCA end + 3 diphosphate. Functionally, catalyzes the addition and repair of the essential 3'-terminal CCA sequence in tRNAs without using a nucleic acid template. Adds these three nucleotides in the order of C, C, and A to the tRNA nucleotide-73, using CTP and ATP as substrates and producing inorganic pyrophosphate. tRNA 3'-terminal CCA addition is required both for tRNA processing and repair. Also involved in tRNA surveillance by mediating tandem CCA addition to generate a CCACCA at the 3' terminus of unstable tRNAs. While stable tRNAs receive only 3'-terminal CCA, unstable tRNAs are marked with CCACCA and rapidly degraded. The polypeptide is CCA-adding enzyme (Methanosarcina barkeri (strain Fusaro / DSM 804)).